The primary structure comprises 198 residues: Recombination protein RecR (198 aa).

The segment at 57–72 adopts a C4-type zinc-finger fold; it reads CSVCGHITDRDPCYIC. Residues 80–175 enclose the Toprim domain; the sequence is SVVCVVQEPK…KVTRIAHGLP (96 aa).

The protein belongs to the RecR family.

May play a role in DNA repair. It seems to be involved in an RecBC-independent recombinational process of DNA repair. It may act with RecF and RecO. The polypeptide is Recombination protein RecR (Bacillus mycoides (strain KBAB4) (Bacillus weihenstephanensis)).